We begin with the raw amino-acid sequence, 757 residues long: Xaa-Pro dipeptidyl-peptidase (757 aa).

Residues Ser-348, Asp-468, and His-498 each act as charge relay system in the active site.

Belongs to the peptidase S15 family. Homodimer.

The protein localises to the cytoplasm. The catalysed reaction is Hydrolyzes Xaa-Pro-|- bonds to release unblocked, N-terminal dipeptides from substrates including Ala-Pro-|-p-nitroanilide and (sequentially) Tyr-Pro-|-Phe-Pro-|-Gly-Pro-|-Ile.. In terms of biological role, removes N-terminal dipeptides sequentially from polypeptides having unsubstituted N-termini provided that the penultimate residue is proline. In Streptococcus pneumoniae (strain Hungary19A-6), this protein is Xaa-Pro dipeptidyl-peptidase.